We begin with the raw amino-acid sequence, 452 residues long: Ethanolamine kinase 1 (452 aa).

The disordered stretch occupies residues 26–64 (AVQTRIGNSAASRRSPAARPPVPAPPALPRGRPGTEGST). The segment covering 43-53 (ARPPVPAPPAL) has biased composition (pro residues).

Belongs to the choline/ethanolamine kinase family. As to expression, expressed in kidney, liver, placenta, heart, leukocyte, ovary and testis.

The protein localises to the cytoplasm. It carries out the reaction ethanolamine + ATP = phosphoethanolamine + ADP + H(+). It participates in phospholipid metabolism; phosphatidylethanolamine biosynthesis; phosphatidylethanolamine from ethanolamine: step 1/3. Highly specific for ethanolamine phosphorylation. May be a rate-controlling step in phosphatidylethanolamine biosynthesis. The sequence is that of Ethanolamine kinase 1 from Homo sapiens (Human).